The following is a 652-amino-acid chain: Threonine--tRNA ligase (652 aa).

Positions Met-1–Thr-61 constitute a TGS domain. The interval Asp-243–Pro-548 is catalytic. Cys-348, His-399, and His-525 together coordinate Zn(2+).

Belongs to the class-II aminoacyl-tRNA synthetase family. Homodimer. Requires Zn(2+) as cofactor.

The protein localises to the cytoplasm. It carries out the reaction tRNA(Thr) + L-threonine + ATP = L-threonyl-tRNA(Thr) + AMP + diphosphate + H(+). In terms of biological role, catalyzes the attachment of threonine to tRNA(Thr) in a two-step reaction: L-threonine is first activated by ATP to form Thr-AMP and then transferred to the acceptor end of tRNA(Thr). Also edits incorrectly charged L-seryl-tRNA(Thr). The protein is Threonine--tRNA ligase of Parvibaculum lavamentivorans (strain DS-1 / DSM 13023 / NCIMB 13966).